Reading from the N-terminus, the 282-residue chain is Phycocyanobilin lyase subunit beta (282 aa).

This sequence belongs to the CpcE/RpcE/PecE family. In terms of assembly, cpcE and CpcF associate to form a lyase.

Required for the chromophorylation of the CpcA gene product. The sequence is that of Phycocyanobilin lyase subunit beta (cpcF1) from Pseudanabaena tenuis (strain PCC 7409).